The following is a 551-amino-acid chain: Steroid transmembrane transporter SLC22A24 (551 aa).

Transmembrane regions (helical) follow at residues 16 to 36 (FQILHLIFVLICFILVVPHTV), 146 to 166 (SVAKFIYMTGIFIGHLMGGHL), 174 to 194 (FIVTCGLLTLAVTETSVAFAP), 204 to 222 (FLTGISSSCIRTNSALLIL), 235 to 255 (ALIFSAGGIGQVLLGVLAFGI), 260 to 280 (HLQLAMSVPVFFLLIPTRWLS), 350 to 370 (ICLLSFVRCVSLISTVGLLIN), 378 to 398 (VFLLQCLYGVVCTPANLLGNF), 410 to 430 (IIFMSVMGISILSITFLTQEM), 435 to 455 (LVLASLGGAISSASLTSTAVL), 469 to 489 (LGVIGIFGSAGAALSPLLMIL), and 496 to 516 (LPWIIYGVLPILSSLVVLLLP). The segment at 524–551 (PDSIQDVENKRKSSREVKKDAVAKVTPF) is disordered. Residues 530–545 (VENKRKSSREVKKDAV) show a composition bias toward basic and acidic residues.

As to expression, localized to the kidney. Mainly expressed in the late segments of proximal tubules.

The protein resides in the cell membrane. It catalyses the reaction estrone 3-sulfate(out) + glutarate(in) = estrone 3-sulfate(in) + glutarate(out). The catalysed reaction is 17beta-estradiol 17-O-(beta-D-glucuronate)(out) + glutarate(in) = 17beta-estradiol 17-O-(beta-D-glucuronate)(in) + glutarate(out). The enzyme catalyses dehydroepiandrosterone 3-sulfate(out) + glutarate(in) = dehydroepiandrosterone 3-sulfate(in) + glutarate(out). Renal transmembrane organic anion/dicarboxylate exchanger that participates in the reabsorption of conjugated steroids, as well as bile acids, driven by an outward gradient of dicarboxylates such as glutarate or succinate. Transports estrone 3-sulfate and estradiol-17-glucuronide (17beta-estradiol 17-O-(beta-D-glucuronate)), but not androstanediol glucuronide (5alpha-androstane-3alpha,17beta-diol 3-O-(beta-D-glucuronate)), nor taurocholate. Prefers sulfate conjugates of steroids rather than glucuronide conjugates. This is Steroid transmembrane transporter SLC22A24 from Rattus norvegicus (Rat).